Consider the following 425-residue polypeptide: MSKIVVAGGTPLYGDVRISGAKNAVLPILCATLLADAPVEISNVPYLHDVITMINLLRELGAGVTMNEGIEAKGRSITIDPRWVRQRVVPYDLVKTMRASVLLLGPLLACYGAAEVALPGGCAIGSRPVDQHIRGLQSLGAEITVENGYIKASVSQGRLKGGRFVFDVVSVTGTENLLMAAAVAQGTSVIENAAMEPEVVDLAECLITLGARVEGAGTPRIVVEGVERLNSGQYAVLPDRIETGTFLVATAMTGGRISMQQVRPQTLDAVLGKLTEAGACIEIGADSIRLDMQGRRPCSVNLTTAPYPGFPTDMQAQFMALNCVAEGVGVIKETIFENRFMHVDELLRLGAKIQIEGHTAIVQGVERLSGAPVMATDLRASASLILAGLVAEGETIIDRIYHLDRGYENIERKLGVLGASIRRMT.

22-23 (KN) serves as a coordination point for phosphoenolpyruvate. R98 lines the UDP-N-acetyl-alpha-D-glucosamine pocket. Catalysis depends on C122, which acts as the Proton donor. 2-(S-cysteinyl)pyruvic acid O-phosphothioketal is present on C122. UDP-N-acetyl-alpha-D-glucosamine is bound by residues 127-131 (RPVDQ), D313, and I335.

Belongs to the EPSP synthase family. MurA subfamily.

It is found in the cytoplasm. It carries out the reaction phosphoenolpyruvate + UDP-N-acetyl-alpha-D-glucosamine = UDP-N-acetyl-3-O-(1-carboxyvinyl)-alpha-D-glucosamine + phosphate. Its pathway is cell wall biogenesis; peptidoglycan biosynthesis. Its function is as follows. Cell wall formation. Adds enolpyruvyl to UDP-N-acetylglucosamine. This is UDP-N-acetylglucosamine 1-carboxyvinyltransferase from Xylella fastidiosa (strain M23).